Consider the following 625-residue polypeptide: Voltage-gated potassium channel KCNC4 (625 aa).

Disordered stretches follow at residues 1–24 (MISS…SKTC) and 65–86 (LADP…SSGS). The tract at residues 1–28 (MISSVCVSSYRGRKSGNKPPSKTCLKEE) is inactivation gate. The Cytoplasmic portion of the chain corresponds to 1-227 (MISSVCVSSY…EDPYSSRAAR (227 aa)). Phosphoserine occurs at positions 8, 9, 15, and 21. Gly residues predominate over residues 77 to 86 (DGGGAGSSGS). Zn(2+)-binding residues include histidine 117, cysteine 123, cysteine 144, and cysteine 145. A helical membrane pass occupies residues 228 to 248 (VVAFASLFFILVSITTFCLET). 2 N-linked (GlcNAc...) asparagine glycosylation sites follow: asparagine 257 and asparagine 266. A helical transmembrane segment spans residues 279–299 (EPILTYIEGVCVMWFTLEFLV). The Cytoplasmic segment spans residues 300–313 (RIVCCPDTLDFVKN). Residues 314–334 (LLNIIDFVAILPFYLEVGLSG) traverse the membrane as a helical segment. Residues 346-365 (FLRVVRFVRILRIFKLTRHF) form a helical; Voltage-sensor membrane-spanning segment. Residues 366-381 (VGLRVLGHTLRASTNE) are Cytoplasmic-facing. Residues 382 to 402 (FLLLIIFLALGVLIFATMIYY) traverse the membrane as a helical segment. Threonine 437, leucine 438, glycine 439, and tyrosine 440 together coordinate K(+). The Selectivity filter signature appears at 437–442 (TLGYGD). A helical transmembrane segment spans residues 453 to 473 (VGALCALAGVLTIAMPVPVIV). The Cytoplasmic segment spans residues 474-625 (NNFGMYYSLA…CVPVSHTCAL (152 aa)). Residues 490-581 (PKKRKKHVPR…RRALRRSGTR (92 aa)) are disordered. Residues 528-543 (AREEGMVERKRADSKQ) are compositionally biased toward basic and acidic residues.

Belongs to the potassium channel family. C (Shaw) (TC 1.A.1.2) subfamily. Kv3.4/KCNC4 sub-subfamily. As to quaternary structure, homotetramer. Heterotetramer of potassium channel proteins. Post-translationally, phosphorylation of serine residues in the inactivation gate inhibits rapid channel closure.

It is found in the membrane. It carries out the reaction K(+)(in) = K(+)(out). Functionally, voltage-gated potassium channel that opens in response to the voltage difference across the membrane, forming a potassium-selective channel through which potassium ions pass in accordance with their electrochemical gradient. The channel displays rapid activation and inactivation kinetics. The chain is Voltage-gated potassium channel KCNC4 from Rattus norvegicus (Rat).